The sequence spans 146 residues: Hemoglobin subunit beta (146 aa).

Val-1 is modified (N-acetylvaline). In terms of domain architecture, Globin spans 2-146 (HLTPEEKNAV…VANALAHKYH (145 aa)). Residue Thr-12 is modified to Phosphothreonine. Position 44 is a phosphoserine (Ser-44). Position 59 is an N6-acetyllysine (Lys-59). His-63 is a binding site for heme b. Lys-82 carries the N6-acetyllysine modification. His-92 contacts heme b. At Cys-93 the chain carries S-nitrosocysteine. Lys-144 carries the post-translational modification N6-acetyllysine.

Belongs to the globin family. Heterotetramer of two alpha chains and two beta chains. Red blood cells.

Its function is as follows. Involved in oxygen transport from the lung to the various peripheral tissues. The sequence is that of Hemoglobin subunit beta (HBB) from Macaca mulatta (Rhesus macaque).